The primary structure comprises 117 residues: Mini-circle uncharacterized 12.9 kDa protein (117 aa).

The protein is Mini-circle uncharacterized 12.9 kDa protein of Streptomyces coelicolor (strain ATCC BAA-471 / A3(2) / M145).